The sequence spans 120 residues: Phosphoribosyl-AMP cyclohydrolase (120 aa).

Residue aspartate 74 participates in Mg(2+) binding. Cysteine 75 serves as a coordination point for Zn(2+). Mg(2+) is bound by residues aspartate 76 and aspartate 78. Cysteine 91 and cysteine 98 together coordinate Zn(2+).

Belongs to the PRA-CH family. Homodimer. Mg(2+) is required as a cofactor. Requires Zn(2+) as cofactor.

The protein resides in the cytoplasm. It carries out the reaction 1-(5-phospho-beta-D-ribosyl)-5'-AMP + H2O = 1-(5-phospho-beta-D-ribosyl)-5-[(5-phospho-beta-D-ribosylamino)methylideneamino]imidazole-4-carboxamide. The protein operates within amino-acid biosynthesis; L-histidine biosynthesis; L-histidine from 5-phospho-alpha-D-ribose 1-diphosphate: step 3/9. Its function is as follows. Catalyzes the hydrolysis of the adenine ring of phosphoribosyl-AMP. The protein is Phosphoribosyl-AMP cyclohydrolase of Natronomonas pharaonis (strain ATCC 35678 / DSM 2160 / CIP 103997 / JCM 8858 / NBRC 14720 / NCIMB 2260 / Gabara) (Halobacterium pharaonis).